A 400-amino-acid polypeptide reads, in one-letter code: MYNVKEDFPIFRNQKDPYIYLDSAATTHKPQCVIDAVTDYYSFSYATVNRAIYSASHDISSAYWRVRSKVAAWIGARYDQEIVFTRGTTSSLNLLAIAANDSWLAGGTVVVSEAEHHANILSWEIACRRSGATVKKVRVNDEGIIDLSHLEKLLKQGVQLVSLAHVSNVSGAVLPVQEVAFLVHRYGALLAIDGAQGVGSGPLNLSGWDVDFYAFSGHKLYAPTGIGVLYGKRELLESLPPVEGGGDMVVVYDSESSRYQEPPLRFEAGTPHIAGVLGLGAAIDYLQALPFSVSDHLTALTRFLYNRLLTIPDIQIVGPQQGTPRGCLCSIIIPGVQASDLGFLLDGKGIAVRSGHQCSQPAMARWDLGHVLRASLGVYNDQQDVISFVEALEDILRSYR.

Lys219 bears the N6-(pyridoxal phosphate)lysine mark. Cys358 acts as the Cysteine persulfide intermediate in catalysis.

This sequence belongs to the class-V pyridoxal-phosphate-dependent aminotransferase family. Csd subfamily. It depends on pyridoxal 5'-phosphate as a cofactor.

The catalysed reaction is (sulfur carrier)-H + L-cysteine = (sulfur carrier)-SH + L-alanine. Its function is as follows. Catalyzes the removal of elemental sulfur and selenium atoms from L-cysteine, L-cystine, L-selenocysteine, and L-selenocystine to produce L-alanine. This Chlamydia muridarum (strain MoPn / Nigg) protein is Probable cysteine desulfurase (csd).